Here is a 393-residue protein sequence, read N- to C-terminus: NAD(P)H-quinone oxidoreductase subunit H, chloroplastic (393 aa).

Belongs to the complex I 49 kDa subunit family. In terms of assembly, NDH is composed of at least 16 different subunits, 5 of which are encoded in the nucleus.

It is found in the plastid. It localises to the chloroplast thylakoid membrane. The enzyme catalyses a plastoquinone + NADH + (n+1) H(+)(in) = a plastoquinol + NAD(+) + n H(+)(out). It catalyses the reaction a plastoquinone + NADPH + (n+1) H(+)(in) = a plastoquinol + NADP(+) + n H(+)(out). NDH shuttles electrons from NAD(P)H:plastoquinone, via FMN and iron-sulfur (Fe-S) centers, to quinones in the photosynthetic chain and possibly in a chloroplast respiratory chain. The immediate electron acceptor for the enzyme in this species is believed to be plastoquinone. Couples the redox reaction to proton translocation, and thus conserves the redox energy in a proton gradient. The chain is NAD(P)H-quinone oxidoreductase subunit H, chloroplastic from Cicer arietinum (Chickpea).